Here is a 40-residue protein sequence, read N- to C-terminus: Cytochrome c3 hydrogenase small chain (40 aa).

Fe cation is required as a cofactor.

It carries out the reaction 2 Fe(III)-[cytochrome c3] + H2 = 2 Fe(II)-[cytochrome c3] + 2 H(+). The sequence is that of Cytochrome c3 hydrogenase small chain (hoxK) from Acidithiobacillus ferrooxidans (Thiobacillus ferrooxidans).